Reading from the N-terminus, the 129-residue chain is Azurin iso-2 (129 aa).

In terms of domain architecture, Plastocyanin-like spans 1–129 (ASCETTVTSG…MMRGTLKLEE (129 aa)). A disulfide bridge links Cys3 with Cys26. Cu cation contacts are provided by His46, Cys112, His117, and Met121.

It localises to the periplasm. Its function is as follows. This methylothroph organism uses azurin in the oxidation of methylamine. Iso-2 is probably the acceptor of electrons from methylamine dehydrogenase. This chain is Azurin iso-2, found in Methylomonas sp. (strain J).